A 213-amino-acid chain; its full sequence is CASP-like protein UU2 (213 aa).

A disordered region spans residues 1-26 (MEDPKGAWQSDVFDNGRDFKPHDKAP). Topologically, residues 1-53 (MEDPKGAWQSDVFDNGRDFKPHDKAPANVTAGTTPPMYNVGAGGSEGNSKALS) are cytoplasmic. The span at 14–25 (DNGRDFKPHDKA) shows a compositional bias: basic and acidic residues. Residues 54-74 (IISIVLRCLSIMFNVVSLGVI) form a helical membrane-spanning segment. Topologically, residues 75-96 (ASNQGKSYFVVWRTLNSSNMQY) are extracellular. Asn90 is a glycosylation site (N-linked (GlcNAc...) asparagine). The helical transmembrane segment at 97–117 (LFAINVIVLVYCVVQLILSII) threads the bilayer. At 118–137 (NLVQGKMVLSGPTQPASTIT) the chain is on the cytoplasmic side. Residues 138-158 (YICDQGLTYMLMAGFGAGVAL) traverse the membrane as a helical segment. At 159–184 (QASVDKGESGMLDCSGANEFCGKNKA) the chain is on the extracellular side. The chain crosses the membrane as a helical span at residues 185 to 205 (SAALSFLGFVCIALSANLNYL). The Cytoplasmic segment spans residues 206–213 (RLYFMAAK).

The protein belongs to the Casparian strip membrane proteins (CASP) family. Homodimer and heterodimers.

The protein localises to the cell membrane. The chain is CASP-like protein UU2 from Physcomitrium patens (Spreading-leaved earth moss).